The chain runs to 759 residues: Phosphoribosylformylglycinamidine synthase subunit PurL (759 aa).

His46 is a catalytic residue. Residues Tyr49 and Lys88 each contribute to the ATP site. Mg(2+) is bound at residue Glu90. Residues 91–94 and Arg113 each bind substrate; that span reads SHNH. Catalysis depends on His92, which acts as the Proton acceptor. Asp114 is a binding site for Mg(2+). Gln237 contributes to the substrate binding site. Asp265 is a Mg(2+) binding site. Substrate is bound at residue 309–311; sequence ESQ. Asp498 and Gly535 together coordinate ATP. Asn536 is a binding site for Mg(2+). Ser538 contacts substrate.

The protein belongs to the FGAMS family. As to quaternary structure, monomer. Part of the FGAM synthase complex composed of 1 PurL, 1 PurQ and 2 PurS subunits.

It localises to the cytoplasm. It carries out the reaction N(2)-formyl-N(1)-(5-phospho-beta-D-ribosyl)glycinamide + L-glutamine + ATP + H2O = 2-formamido-N(1)-(5-O-phospho-beta-D-ribosyl)acetamidine + L-glutamate + ADP + phosphate + H(+). It participates in purine metabolism; IMP biosynthesis via de novo pathway; 5-amino-1-(5-phospho-D-ribosyl)imidazole from N(2)-formyl-N(1)-(5-phospho-D-ribosyl)glycinamide: step 1/2. Part of the phosphoribosylformylglycinamidine synthase complex involved in the purines biosynthetic pathway. Catalyzes the ATP-dependent conversion of formylglycinamide ribonucleotide (FGAR) and glutamine to yield formylglycinamidine ribonucleotide (FGAM) and glutamate. The FGAM synthase complex is composed of three subunits. PurQ produces an ammonia molecule by converting glutamine to glutamate. PurL transfers the ammonia molecule to FGAR to form FGAM in an ATP-dependent manner. PurS interacts with PurQ and PurL and is thought to assist in the transfer of the ammonia molecule from PurQ to PurL. The sequence is that of Phosphoribosylformylglycinamidine synthase subunit PurL from Anaeromyxobacter sp. (strain K).